Consider the following 1236-residue polypeptide: MNSGPACATADILVAPPPELRRSEPSSLLIRLLPVVMSVATVGVMVTVFLPGSPATRHPTFLAFPMMMLVSLVVTAVTGRGRRHVSGIHNDRVDYLGYLSVLRTSVTQTAAAQHVSLNWTHPDPATLWTLIGGPRMWERRPGAADFCRIRVGVGSAPLATRLVVGQLPPAQRADPVTRAALRCFLAAHATIADAPIAIPLRVGGPIAIDGDPTKVRGLLRAMICQLAVWHSPEELLIAGVVSDRNRAHWDWLKWLPHNQHPNACDALGPAPMVYSTLAEMQNALAATVLAHVVAIVDTAERGNGAITGVITIEVGARRDGAPPVVRCAGEVTALACPDQLEPQDALVCARRLAAHRVGHSGRTFIRGSGWAELVGIGDVAAFDPSTLWRNVNQHDRLRVPIGVTPDGTAVQLDIKEAAEQGMGPHGLCVGATGSGKSELLRTIALGMMARNSPEVLNLLLVDFKGGATFLDLAGAPHVAAVITNLAEEAPLVARMQDALAGEMSRRQQLLRMAGHLVSVTAYQRARQTGAQLPCLPILFIVVDEFSELLSQHPEFVDVFLAIGRVGRSLGMHLLLASQRLDEGRLRGLETHLSYRMCLKTWSASESRNVLGTQDAYQLPNTPGAGLLQTGTGELIRFQTAFVSGPLRRASPSAVHPVAPPSVRPFTTHAAAPVTAGPVGGTAEVPTPTVLHAVLDRLVGHGPAAHQVWLPPLDEPPMLGALLRDAEPAQAELAVPIGIVDRPFEQSRVPLTIDLSGAAGNVAVVGAPQTGKSTALRTLIMALAATHDAGRVQFYCLDFGGGALAQVDELPHVGAVAGRAQPQLASRMLAELESAVRFREAFFRDHGIDSVARYRQLRAKSAAESFADIFLVIDGWASLRQEFAALEESIVALAAQGLSFGVHVALSAARWAEIRPSLRDQIGSRIELRLADPADSELDRRQAQRVPVDRPGRGLSRDGMHMVIALPDLDGVALRRRSGDPVAPPIPLLPARVDYDSVVARAGDELGAHILLGLEERRGQPVAVDFGRHPHLLVLGDNECGKTAALRTLCREIVRTHTAARAQLLIVDFRHTLLDVIESEHMSGYVSSPAALGAKLSSLVDLLQARMPAPDVSQAQLRARSWWSGPDIYVVVDDYDLVAVSSGNPLMVLLEYLPHARDLGLHLVVARRSGGAARALFEPVLASLRDLGCRALLMSGRPDEGALFGSSRPMPLPPGRGILVTGAGDEQLVQVAWSPPP.

Helical transmembrane passes span 32–52 (LLPV…FLPG) and 59–79 (PTFL…AVTG). 3 consecutive FtsK domains span residues 407 to 607 (GTAV…SESR), 747 to 936 (RVPL…ADSE), and 1018 to 1201 (GQPV…DEGA). ATP is bound by residues 430-437 (GATGSGKS), 765-772 (GAPQTGKS), and 1035-1042 (GDNECGKT).

As to quaternary structure, part of the ESX-4 / type VII secretion system (T7SS), which is composed of cytosolic and membrane components.

It is found in the cell membrane. The protein is ESX-4 secretion system protein EccC4 (eccC4) of Mycobacterium tuberculosis (strain ATCC 25618 / H37Rv).